A 479-amino-acid chain; its full sequence is Galactosylgalactosylxylosylprotein 3-beta-glucuronosyltransferase P (479 aa).

Topologically, residues 1–34 (MKGGNYTSLGTCSGINVSGNVAGTRKMSLGKSIK) are cytoplasmic. A helical; Signal-anchor for type II membrane protein transmembrane segment spans residues 35–50 (MYLTIFILTTCIYMAL). Residues 51–479 (YQYHISREPF…EHIDRLLVRP (429 aa)) lie on the Lumenal side of the membrane. Residues Asn90, Asn97, Asn98, and Asn271 are each glycosylated (N-linked (GlcNAc...) asparagine). Residues 94 to 120 (NTNNNSTTTSTTTTTAPTTPTTTTTTT) show a composition bias toward low complexity. Residues 94–122 (NTNNNSTTTSTTTTTAPTTPTTTTTTTVG) are disordered. Mn(2+) is bound at residue Asp335. Glu418 functions as the Proton acceptor in the catalytic mechanism. N-linked (GlcNAc...) asparagine glycosylation occurs at Asn460.

The protein belongs to the glycosyltransferase 43 family. It depends on Mn(2+) as a cofactor.

It localises to the golgi apparatus membrane. It carries out the reaction 3-O-(beta-D-galactosyl-(1-&gt;3)-beta-D-galactosyl-(1-&gt;4)-beta-D-xylosyl)-L-seryl-[protein] + UDP-alpha-D-glucuronate = 3-O-(beta-D-GlcA-(1-&gt;3)-beta-D-Gal-(1-&gt;3)-beta-D-Gal-(1-&gt;4)-beta-D-Xyl)-L-seryl-[protein] + UDP + H(+). It participates in protein modification; protein glycosylation. Involved in the biosynthesis of L2/HNK-1 carbohydrate epitope on both glycolipids and glycoproteins. Enzyme has a broad specificity. This chain is Galactosylgalactosylxylosylprotein 3-beta-glucuronosyltransferase P (GlcAT-P), found in Drosophila melanogaster (Fruit fly).